A 371-amino-acid polypeptide reads, in one-letter code: MSKKDYYEILGIAKNANEQDIKDAYKRLAKKYHPDRNKDKDAETKFKEMKEAYEVLSDQQKRAAYDQHGHTAFEQSGMGGGFHNSSNFSNVFNDVFSDFFGGHQQRTQRGRDLRYTLNLTLEEAVRGASKEIHITTLVHCEHCKGSGAKQGTRPVTCTTCRGVGEVHMQQGFFTIQQTCPRCHGQGQMIKDPCRQCRGQGKVEEPKTFSVKVPAGIDSNDCLRLNGKGEVGEMGAPSGDLYVQIHVDRHHIFERSKNNLYCKVPINFTTAALGGEIEVPTLDGAIKLKIPPETQTGQCFRIPNKGIKPEKKTPGDLFCTVFIETPVHLNEKQKKLLRDLDQSFCETSSKKNTPETKKFLESMKKFFDNLTH.

Residues 5–69 (DYYEILGIAK…QKRAAYDQHG (65 aa)) enclose the J domain. The CR-type zinc finger occupies 127–205 (GASKEIHITT…CRGQGKVEEP (79 aa)). Residues Cys-140, Cys-143, Cys-157, Cys-160, Cys-179, Cys-182, Cys-193, and Cys-196 each coordinate Zn(2+). CXXCXGXG motif repeat units lie at residues 140-147 (CEHCKGSG), 157-164 (CTTCRGVG), 179-186 (CPRCHGQG), and 193-200 (CRQCRGQG).

Belongs to the DnaJ family. In terms of assembly, homodimer. The cofactor is Zn(2+).

It localises to the cytoplasm. In terms of biological role, participates actively in the response to hyperosmotic and heat shock by preventing the aggregation of stress-denatured proteins and by disaggregating proteins, also in an autonomous, DnaK-independent fashion. Unfolded proteins bind initially to DnaJ; upon interaction with the DnaJ-bound protein, DnaK hydrolyzes its bound ATP, resulting in the formation of a stable complex. GrpE releases ADP from DnaK; ATP binding to DnaK triggers the release of the substrate protein, thus completing the reaction cycle. Several rounds of ATP-dependent interactions between DnaJ, DnaK and GrpE are required for fully efficient folding. Also involved, together with DnaK and GrpE, in the DNA replication of plasmids through activation of initiation proteins. The polypeptide is Chaperone protein DnaJ (Hamiltonella defensa subsp. Acyrthosiphon pisum (strain 5AT)).